A 427-amino-acid chain; its full sequence is Histidine--tRNA ligase (427 aa).

It belongs to the class-II aminoacyl-tRNA synthetase family. Homodimer.

Its subcellular location is the cytoplasm. It catalyses the reaction tRNA(His) + L-histidine + ATP = L-histidyl-tRNA(His) + AMP + diphosphate + H(+). This is Histidine--tRNA ligase (hisS) from Mycobacterium leprae (strain TN).